The primary structure comprises 262 residues: MAQPAELSREENVYMAKLAEQAERYEEMVEFMEKVAKTVDSEELTVEERNLLSVAYKNVIGARRASWRIISSIEQKEESRGNEDRVTLIKDYRGKIEVELTKICDGILKLLDSHLVPSSTAPESKVFYLKMKGDYYRYLAEFKSGTERKDAAENTMVAYKAAQEIALAELPPTHPIRLGLALNFSVFYYEILNSPDRACDLAKQAFDEAISELDSLSEESYKDSTLIMQLLRDNLTLWTSDISEDAAEEMKDAPKGESGDGQ.

It belongs to the 14-3-3 family.

This chain is 14-3-3-like protein B, found in Hordeum vulgare (Barley).